A 255-amino-acid chain; its full sequence is NAD-dependent protein deacylase (255 aa).

In terms of domain architecture, Deacetylase sirtuin-type spans 1–253; that stretch reads MEFSDELLAS…PLLLQALRRS (253 aa). Position 22–42 (22–42) interacts with NAD(+); it reads GAGVSAESGIPTFRDALTGFW. Y67 and R70 together coordinate substrate. 101-104 is a binding site for NAD(+); it reads QNVD. The active-site Proton acceptor is the H119. 4 residues coordinate Zn(2+): C127, C130, C155, and C158. NAD(+) contacts are provided by residues 195 to 197, 221 to 223, and A239; these read GTS and NPA.

This sequence belongs to the sirtuin family. Class III subfamily. Zn(2+) is required as a cofactor.

Its subcellular location is the cytoplasm. The enzyme catalyses N(6)-acetyl-L-lysyl-[protein] + NAD(+) + H2O = 2''-O-acetyl-ADP-D-ribose + nicotinamide + L-lysyl-[protein]. It carries out the reaction N(6)-succinyl-L-lysyl-[protein] + NAD(+) + H2O = 2''-O-succinyl-ADP-D-ribose + nicotinamide + L-lysyl-[protein]. Its function is as follows. NAD-dependent lysine deacetylase and desuccinylase that specifically removes acetyl and succinyl groups on target proteins. Modulates the activities of several proteins which are inactive in their acylated form. The protein is NAD-dependent protein deacylase of Methylococcus capsulatus (strain ATCC 33009 / NCIMB 11132 / Bath).